Here is a 436-residue protein sequence, read N- to C-terminus: UPF0597 protein YhaM (436 aa).

It belongs to the UPF0597 family.

The sequence is that of UPF0597 protein YhaM from Shigella flexneri serotype 5b (strain 8401).